A 346-amino-acid polypeptide reads, in one-letter code: Methylthioribose-1-phosphate isomerase (346 aa).

Substrate contacts are provided by residues 48 to 50 (RGA), Arg-91, and Gln-200. Catalysis depends on Asp-241, which acts as the Proton donor. 251 to 252 (NK) is a substrate binding site.

It belongs to the eIF-2B alpha/beta/delta subunits family. MtnA subfamily.

The enzyme catalyses 5-(methylsulfanyl)-alpha-D-ribose 1-phosphate = 5-(methylsulfanyl)-D-ribulose 1-phosphate. It participates in amino-acid biosynthesis; L-methionine biosynthesis via salvage pathway; L-methionine from S-methyl-5-thio-alpha-D-ribose 1-phosphate: step 1/6. In terms of biological role, catalyzes the interconversion of methylthioribose-1-phosphate (MTR-1-P) into methylthioribulose-1-phosphate (MTRu-1-P). This Picosynechococcus sp. (strain ATCC 27264 / PCC 7002 / PR-6) (Agmenellum quadruplicatum) protein is Methylthioribose-1-phosphate isomerase.